The following is a 392-amino-acid chain: Glyceraldehyde-3-phosphate dehydrogenase A, chloroplastic (392 aa).

Residues 1-56 (NSSLQVSNKGFSEFSGLRTSSAIPFGRKTNDDLLSVVAFQTSVIGGGNSKRGVVEA) constitute a chloroplast transit peptide. Residues 67–68 (RI), aspartate 91, and arginine 136 each bind NADP(+). Residues 208-210 (SCT), threonine 239, arginine 254, 267-268 (TG), and arginine 290 contribute to the D-glyceraldehyde 3-phosphate site. Cysteine 209 functions as the Nucleophile in the catalytic mechanism. An NADP(+)-binding site is contributed by asparagine 372.

It belongs to the glyceraldehyde-3-phosphate dehydrogenase family. In terms of assembly, tetramer of either four A chains (GAPDH 2) or two A and two B chains (GAPDH 1).

The protein resides in the plastid. Its subcellular location is the chloroplast. It carries out the reaction D-glyceraldehyde 3-phosphate + phosphate + NADP(+) = (2R)-3-phospho-glyceroyl phosphate + NADPH + H(+). It participates in carbohydrate biosynthesis; Calvin cycle. The sequence is that of Glyceraldehyde-3-phosphate dehydrogenase A, chloroplastic (GAPA) from Nicotiana tabacum (Common tobacco).